Here is a 153-residue protein sequence, read N- to C-terminus: Hemoglobin-3 (153 aa).

At S2 the chain carries N-acetylserine. One can recognise a Globin domain in the interval 4–150 (GLTGPQKAAL…ICRVQGDFMK (147 aa)). H99 provides a ligand contact to heme b.

This sequence belongs to the globin family. In terms of assembly, homotetramer.

The protein localises to the cytoplasm. In Phacoides pectinatus (Thick lucine), this protein is Hemoglobin-3.